Here is a 304-residue protein sequence, read N- to C-terminus: Germ cell-specific gene 1-like protein (304 aa).

Topologically, residues 1 to 8 are cytoplasmic; sequence MKTTRKCR. A helical transmembrane segment spans residues 9-29; the sequence is ALLSVGLNLLALLFSTTAFIT. The Extracellular segment spans residues 30–112; sequence TYWCEGTQRV…FIDLAPASER (83 aa). The helical transmembrane segment at 113-133 threads the bilayer; the sequence is GVLWLSVVSEVLYIMLLVVGF. The Cytoplasmic portion of the chain corresponds to 134 to 153; that stretch reads SLMCLELFHSSNVIDGLKLN. A helical membrane pass occupies residues 154–174; that stretch reads AFAAVFTVLSGLLGMVAHMMY. At 175–197 the chain is on the extracellular side; that stretch reads TQVFQITVSLGPEDWRPHTWDYG. The helical transmembrane segment at 198–218 threads the bilayer; the sequence is WSFCMAWGSFTCCMAASVTTL. Residues 219-304 are Cytoplasmic-facing; that stretch reads NSYTKTVIEF…NTESLGEEQC (86 aa). Residues 266–278 are compositionally biased toward polar residues; that stretch reads VDVYPSHGSSHGN. A disordered region spans residues 266–304; it reads VDVYPSHGSSHGNSRGKMRSPPAPVDQGDNTESLGEEQC.

It belongs to the GSG1 family. As to quaternary structure, component of the AMPAR complex.

Its subcellular location is the cell membrane. The protein resides in the synapse. As a component of the AMPAR complex, modifies AMPA receptor (AMPAR) gating. The protein is Germ cell-specific gene 1-like protein (gsg1l) of Danio rerio (Zebrafish).